The primary structure comprises 305 residues: MNPDSAAGRSSRRAFLAAVGGVAAGGLTATAGCLGRGEEAPTVSILAAGSLQRALTTEFDAPDGTRIEVEAHGSARVARMVDDDQRDPDIVALADPALFDAPLSVPWYATFANNALVVAYNPQTEGGTRVTEAASWPDALLDDAVSLGRTDPDLDPLGYRTRFALALAADHYDRPALTADLLRRDQIYPETQLLAQFDAGGVDAAFVYRSMAVERDYPYLELPAAINLSDPDHASAYATVSYTLPDGVTVRGGPIRYAATRRTDTAAAKSVFEALVGTAGDFLEPSGFTVRASHPHYFGDVPPTA.

The tat-type signal signal peptide spans 1 to 40; the sequence is MNPDSAAGRSSRRAFLAAVGGVAAGGLTATAGCLGRGEEA.

This sequence belongs to the bacterial solute-binding protein 1 family. WtpA subfamily. As to quaternary structure, the complex is composed of two ATP-binding proteins, two transmembrane proteins (HVO_B0370) and a solute-binding protein (HVO_B0369). Predicted to be exported by the Tat system. The position of the signal peptide cleavage has not been experimentally proven.

Functionally, part of an ABC transporter complex involved in molybdenum import. The chain is Putative ABC transporter molybdenum-binding protein HVO_B0369 from Haloferax volcanii (strain ATCC 29605 / DSM 3757 / JCM 8879 / NBRC 14742 / NCIMB 2012 / VKM B-1768 / DS2) (Halobacterium volcanii).